The chain runs to 692 residues: Proprotein convertase subtilisin/kexin type 9 (692 aa).

The first 30 residues, 1 to 30 (MGTVSSRRSWWPLPLLLLLLLLLGPAGARA), serve as a signal peptide directing secretion. The propeptide occupies 31 to 152 (QEDEDGDYEE…IEEDSSVFAQ (122 aa)). Tyr38 is subject to Sulfotyrosine. Ser47 is subject to Phosphoserine. The region spanning 77-149 (TYVVVLKEET…VDYIEEDSSV (73 aa)) is the Inhibitor I9 domain. Residues 155–461 (PWNLERITPP…GWQLFCRTVW (307 aa)) enclose the Peptidase S8 domain. Active-site charge relay system residues include Asp186 and His226. Disulfide bonds link Cys223-Cys255 and Cys323-Cys358. Ser386 (charge relay system) is an active-site residue. Residues 450–692 (GAGWQLFCRT…HLAQASQELQ (243 aa)) are C-terminal domain. 3 cysteine pairs are disulfide-bonded: Cys457–Cys527, Cys477–Cys526, and Cys486–Cys509. N-linked (GlcNAc...) asparagine glycosylation occurs at Asn533. Intrachain disulfides connect Cys534–Cys601, Cys552–Cys600, Cys562–Cys588, Cys608–Cys679, Cys626–Cys678, and Cys635–Cys654. A Phosphoserine modification is found at Ser688.

Belongs to the peptidase S8 family. Monomer. Can self-associate to form dimers and higher multimers which may have increased LDLR degrading activity. The precursor protein but not the mature protein may form multimers. Interacts with APOB, VLDLR, LRP8/APOER2 and BACE1. The full-length immature form (pro-PCSK9) interacts with SCNN1A, SCNN1B and SCNN1G. The pro-PCSK9 form (via C-terminal domain) interacts with LDLR. Interacts (via the C-terminal domain) with ANXA2 (via repeat Annexin 1); the interaction inhibits the degradation of LDLR. The cofactor is Ca(2+). In terms of processing, cleavage by furin and PCSK5 generates a truncated inactive protein that is unable to induce LDLR degradation. Undergoes autocatalytic cleavage in the endoplasmic reticulum to release the propeptide from the N-terminus and the cleavage of the propeptide is strictly required for its maturation and activation. The cleaved propeptide however remains associated with the catalytic domain through non-covalent interactions, preventing potential substrates from accessing its active site. As a result, it is secreted from cells as a propeptide-containing, enzymatically inactive protein. Post-translationally, phosphorylation protects the propeptide against proteolysis.

The protein resides in the cytoplasm. The protein localises to the secreted. Its subcellular location is the endosome. It localises to the lysosome. It is found in the cell surface. The protein resides in the endoplasmic reticulum. The protein localises to the golgi apparatus. Its activity is regulated as follows. Its proteolytic activity is autoinhibited by the non-covalent binding of the propeptide to the catalytic domain. Inhibited by EGTA. Functionally, crucial player in the regulation of plasma cholesterol homeostasis. Binds to low-density lipid receptor family members: low density lipoprotein receptor (LDLR), very low density lipoprotein receptor (VLDLR), apolipoprotein E receptor (LRP1/APOER) and apolipoprotein receptor 2 (LRP8/APOER2), and promotes their degradation in intracellular acidic compartments. Acts via a non-proteolytic mechanism to enhance the degradation of the hepatic LDLR through a clathrin LDLRAP1/ARH-mediated pathway. May prevent the recycling of LDLR from endosomes to the cell surface or direct it to lysosomes for degradation. Can induce ubiquitination of LDLR leading to its subsequent degradation. Inhibits intracellular degradation of APOB via the autophagosome/lysosome pathway in a LDLR-independent manner. Involved in the disposal of non-acetylated intermediates of BACE1 in the early secretory pathway. Inhibits epithelial Na(+) channel (ENaC)-mediated Na(+) absorption by reducing ENaC surface expression primarily by increasing its proteasomal degradation. Regulates neuronal apoptosis via modulation of LRP8/APOER2 levels and related anti-apoptotic signaling pathways. This chain is Proprotein convertase subtilisin/kexin type 9 (PCSK9), found in Pan troglodytes (Chimpanzee).